Consider the following 460-residue polypeptide: uncharacterized protein (460 aa).

The TRAM domain maps to 5–63 (TWHQGELIEVAIADLSDTGDGVGRFAERVVFVPDTVPGDRVLVRLLHVKPNYAHGKLHQ). [4Fe-4S] cluster is bound by residues C76, C82, C85, and C164. Residues Q288, Y317, E338, and D383 each contribute to the S-adenosyl-L-methionine site. C410 acts as the Nucleophile in catalysis.

It belongs to the class I-like SAM-binding methyltransferase superfamily. RNA M5U methyltransferase family.

This is an uncharacterized protein from Nostoc sp. (strain PCC 7120 / SAG 25.82 / UTEX 2576).